A 679-amino-acid chain; its full sequence is Glycine--tRNA ligase beta subunit (679 aa).

This sequence belongs to the class-II aminoacyl-tRNA synthetase family. In terms of assembly, tetramer of two alpha and two beta subunits.

The protein resides in the cytoplasm. The enzyme catalyses tRNA(Gly) + glycine + ATP = glycyl-tRNA(Gly) + AMP + diphosphate. This chain is Glycine--tRNA ligase beta subunit, found in Streptococcus pyogenes serotype M18 (strain MGAS8232).